The chain runs to 498 residues: ATP synthase subunit alpha, chloroplastic (498 aa).

170-177 (GDRQTGKT) provides a ligand contact to ATP.

The protein belongs to the ATPase alpha/beta chains family. F-type ATPases have 2 components, CF(1) - the catalytic core - and CF(0) - the membrane proton channel. CF(1) has five subunits: alpha(3), beta(3), gamma(1), delta(1), epsilon(1). CF(0) has four main subunits: a, b, b' and c.

Its subcellular location is the plastid. The protein localises to the chloroplast thylakoid membrane. The catalysed reaction is ATP + H2O + 4 H(+)(in) = ADP + phosphate + 5 H(+)(out). In terms of biological role, produces ATP from ADP in the presence of a proton gradient across the membrane. The alpha chain is a regulatory subunit. This Oltmannsiellopsis viridis (Marine flagellate) protein is ATP synthase subunit alpha, chloroplastic.